The following is a 1124-amino-acid chain: Anillin (1124 aa).

Methionine 1 is modified (N-acetylmethionine). The span at 1-25 (MDPFTEKLLERTRARRENLQRKMAE) shows a compositional bias: basic and acidic residues. Residues 1-45 (MDPFTEKLLERTRARRENLQRKMAERPTAAPRSMTHAKRARQPLS) form a required for ubiquitination region. Disordered stretches follow at residues 1 to 113 (MDPF…ADTI) and 136 to 196 (ATAA…ATPV). Positions 1–155 (MDPFTEKLLE…MQKLAEQRRR (155 aa)) are interaction with CD2AP. The interval 1–230 (MDPFTEKLLE…AKQNSVQEQP (230 aa)) is nuclear localization. 2 positions are modified to phosphoserine: serine 54 and serine 72. Positions 77–96 (VEVSNLENKQPVESTSAKSC) are enriched in polar residues. Serine 97 and serine 102 each carry phosphoserine. Positions 97 to 108 (SPSPVSPQVQPQ) are enriched in low complexity. Residues 148 to 158 (KLAEQRRRWDN) are compositionally biased toward basic and acidic residues. 2 positions are modified to phosphoserine: serine 172 and serine 182. A Phosphothreonine modification is found at threonine 194. A phosphoserine mark is found at serine 225 and serine 252. The interval 231–676 (GTACLSKFSS…RDLLYSIDAY (446 aa)) is interaction with F-actin. A Glycyl lysine isopeptide (Lys-Gly) (interchain with G-Cter in SUMO1) cross-link involves residue lysine 254. Serine 261 bears the Phosphoserine mark. Polar residues predominate over residues 294–305 (TSPVKSTTSITD). The disordered stretch occupies residues 294 to 328 (TSPVKSTTSITDAKSCEGQNPELLPKTPISPLKTG). Threonine 320 bears the Phosphothreonine mark. 2 positions are modified to phosphoserine: serine 323 and serine 339. Threonine 364 is modified (phosphothreonine). Lysine 371 carries the post-translational modification N6-acetyllysine. Over residues 380–389 (RCQEHSKESP) the composition is skewed to basic and acidic residues. A disordered region spans residues 380-399 (RCQEHSKESPARSTPHRTPI). 2 positions are modified to phosphothreonine: threonine 397 and threonine 401. 7 positions are modified to phosphoserine: serine 417, serine 419, serine 449, serine 485, serine 518, serine 553, and serine 561. Residues 569–604 (FSDVLEEGELDMEKSQEEMDQALAESSEEQEDALNI) are a coiled coil. Disordered stretches follow at residues 579-600 (DMEK…EQED) and 625-664 (LVST…SLGS). Composition is skewed to basic and acidic residues over residues 631 to 644 (LELK…ESPK) and 654 to 664 (PRAESGDSLGS). 5 positions are modified to phosphoserine: serine 637, serine 642, serine 658, serine 661, and serine 664. Tyrosine 671 carries the post-translational modification Phosphotyrosine. Residues serine 678, serine 688, serine 792, and serine 927 each carry the phosphoserine modification. Residues 730–1124 (QQTVIYQASQ…DACYKPIGKP (395 aa)) are localization to the cleavage furrow. In terms of domain architecture, PH spans 983 to 1107 (SVEERGFLTI…WMQKLNQVLV (125 aa)).

Interacts with F-actin. Interacts with CD2AP. May interact with RHOA. Interacts with FZR1/CDH1 during mitotic exit. Post-translationally, phosphorylated during mitosis. In terms of processing, ubiquitinated, and this requires FZR1/CDH1. Ubiquitously expressed. Present at highest levels in the brain, at high levels in the placenta and testis, at intermediate levels in the intestine, ovary, skeletal muscle and thymus and at lower levels in heart, kidney, liver, lung, pancreas, prostate and spleen. In the kidney, it is widely expressed in tubules, but sparsely expressed in the glomerulus. Expression is significantly increased in renal biopsy specimens from idiopathic FSGS. Overexpressed in many tumor types including breast, colorectal, endometrial, hepatic, kidney, lung, ovarian and pancreatic tumors.

The protein localises to the nucleus. The protein resides in the cytoplasm. Its subcellular location is the cytoskeleton. It is found in the cell cortex. It localises to the cell projection. The protein localises to the bleb. In terms of biological role, required for cytokinesis. Essential for the structural integrity of the cleavage furrow and for completion of cleavage furrow ingression. Plays a role in bleb assembly during metaphase and anaphase of mitosis. May play a significant role in podocyte cell migration. This Homo sapiens (Human) protein is Anillin (ANLN).